The primary structure comprises 516 residues: Arabinose import ATP-binding protein AraG (516 aa).

2 ABC transporter domains span residues 5–240 (LRFD…MVGR) and 240–497 (REIS…LPQS). Position 37–44 (37–44 (GENGAGKS)) interacts with ATP.

It belongs to the ABC transporter superfamily. Arabinose importer (TC 3.A.1.2.2) family. As to quaternary structure, the complex is composed of two ATP-binding proteins (AraG), two transmembrane proteins (AraH) and a solute-binding protein (AraF).

The protein resides in the cell inner membrane. It catalyses the reaction L-arabinose(out) + ATP + H2O = L-arabinose(in) + ADP + phosphate + H(+). Part of the ABC transporter complex AraFGH involved in arabinose import. Responsible for energy coupling to the transport system. In Paraburkholderia xenovorans (strain LB400), this protein is Arabinose import ATP-binding protein AraG.